A 149-amino-acid polypeptide reads, in one-letter code: Transcriptional repressor NrdR (149 aa).

A zinc finger lies at 3 to 34 (CPFCSAVDTKVIDSRLVGDGSQVRRRRQCLVC). The region spanning 49–139 (PRVVKSNGVR…VYRSFEDVRE (91 aa)) is the ATP-cone domain.

Belongs to the NrdR family. Zn(2+) serves as cofactor.

Negatively regulates transcription of bacterial ribonucleotide reductase nrd genes and operons by binding to NrdR-boxes. The protein is Transcriptional repressor NrdR of Edwardsiella ictaluri (strain 93-146).